Consider the following 927-residue polypeptide: Phosphoenolpyruvate carboxylase (927 aa).

Active-site residues include His160 and Lys589.

The protein belongs to the PEPCase type 1 family. The cofactor is Mg(2+).

It catalyses the reaction oxaloacetate + phosphate = phosphoenolpyruvate + hydrogencarbonate. In terms of biological role, forms oxaloacetate, a four-carbon dicarboxylic acid source for the tricarboxylic acid cycle. This Rhodopseudomonas palustris (strain BisA53) protein is Phosphoenolpyruvate carboxylase.